The sequence spans 424 residues: Chloroquine resistance transporter (424 aa).

At 1 to 49 the chain is on the cytoplasmic side; the sequence is MKFASKKNNQKNSSKNDERYRELDNLVQEGNGSRLGGGSCLGKCAHVFK. An intramembrane segment occupies 50–58; that stretch reads LIFKEIKDN. A helical membrane pass occupies residues 59–83; that stretch reads IFIYILSIIYLSVSVMNTIFAKRTL. At 84–89 the chain is on the vacuolar side; that stretch reads NKIGNY. A helical transmembrane segment spans residues 90–111; sequence SFVTSETHNFICMIMFFIVYSL. Residues 112–126 are Cytoplasmic-facing; the sequence is FGNKKGNSKERHRSF. The helical transmembrane segment at 127 to 147 threads the bilayer; the sequence is NLQFFAISMLDACSVILAFIG. Topologically, residues 148–152 are vacuolar; it reads LTRTT. Residues 153–173 form a helical membrane-spanning segment; sequence GNIQSFVLQLSIPINMFFCFL. The Cytoplasmic segment spans residues 174-180; the sequence is ILRYRYH. The helical transmembrane segment at 181-202 threads the bilayer; that stretch reads LYNYLGAVIIVVTIALVEMKLS. At 203 to 210 the chain is on the vacuolar side; sequence FETQEENS. Residues 211 to 236 form a helical membrane-spanning segment; that stretch reads IIFNLVLISSLIPVCFSNMTREIVFK. The Cytoplasmic portion of the chain corresponds to 237–241; it reads KYKID. The helical transmembrane segment at 242-263 threads the bilayer; the sequence is ILRLNAMVSFFQLFTSCLILPV. Residues 264–279 are Vacuolar-facing; that stretch reads YTLPFLKQLHLPYNEI. Residues 280–292 lie within the membrane without spanning it; sequence WTNIKNGFACLFL. 2 disulfides stabilise this stretch: Cys289–Cys312 and Cys301–Cys309. At 293–314 the chain is on the vacuolar side; the sequence is GRNTVVENCGLGMAKLCDDCDG. A helical transmembrane segment spans residues 315 to 339; that stretch reads AWKTFALFSFFDICDNLITSYIIDK. Residues 340-343 lie on the Cytoplasmic side of the membrane; it reads FSTM. A helical transmembrane segment spans residues 344-361; the sequence is TYTIVSCIQGPALAIAYY. The Vacuolar segment spans residues 362 to 374; sequence FKFLAGDVVREPR. A helical membrane pass occupies residues 375-397; it reads LLDFVTLFGYLFGSIIYRVGNII. Residues 398 to 424 lie on the Cytoplasmic side of the membrane; that stretch reads LERKKMRNEENEDSEGELTNVDSIITQ.

The protein belongs to the CRT-like transporter family. Monomer.

It is found in the membrane. Its subcellular location is the vacuole membrane. The catalysed reaction is L-arginine(in) = L-arginine(out). It catalyses the reaction L-lysine(in) = L-lysine(out). The enzyme catalyses L-histidine(out) = L-histidine(in). It carries out the reaction Fe(3+)(in) = Fe(3+)(out). The catalysed reaction is Fe(2+)(in) = Fe(2+)(out). In terms of biological role, nutrient transporter. Substrate transport is pH-dependent. Can transport arginine, lysine, histidine and peptides. Involved in maintaining the osmotic homeostasis of the digestive vacuole. Required for the normal asexual intraerythrocytic proliferation of parasites. Can transport Fe(2+) and Fe(3+). The polypeptide is Chloroquine resistance transporter (Plasmodium falciparum (isolate 7G8)).